The following is a 790-amino-acid chain: Phenylalanine--tRNA ligase beta subunit (790 aa).

A tRNA-binding domain is found at 39–147 (AKPFSGIVVG…ADAPVGVDVR (109 aa)). One can recognise a B5 domain in the interval 400–476 (PAKALVNLRH…RLYGYNKLPV (77 aa)). Mg(2+) contacts are provided by Asp-454, Asp-460, Glu-463, and Glu-464. The FDX-ACB domain maps to 696-789 (SRFPEIRRDL…LGNRFGASLR (94 aa)).

Belongs to the phenylalanyl-tRNA synthetase beta subunit family. Type 1 subfamily. Tetramer of two alpha and two beta subunits. Mg(2+) serves as cofactor.

Its subcellular location is the cytoplasm. The enzyme catalyses tRNA(Phe) + L-phenylalanine + ATP = L-phenylalanyl-tRNA(Phe) + AMP + diphosphate + H(+). The polypeptide is Phenylalanine--tRNA ligase beta subunit (Hahella chejuensis (strain KCTC 2396)).